The primary structure comprises 46 residues: Antimicrobial peptide eNAP-2 (46 aa).

In terms of domain architecture, WAP spans R12–N46.

Its function is as follows. Has antibiotic activity against several equine uterine pathogens; S.zooepidemicus, E.coli and P.aeruginosa. Highly efficient against S.zoopedemicus. Not active against K.pneumoniae. Selectively inactivates microbial serine proteases (subtilisin A and proteinase K) without inhibiting mammalian serine proteases (human neutrophil elastase, human cathepsin G and bovine pancreatic trypsin). The polypeptide is Antimicrobial peptide eNAP-2 (Equus caballus (Horse)).